The chain runs to 87 residues: CRISPR-associated endoribonuclease Cas2 (87 aa).

D8 lines the Mg(2+) pocket.

Belongs to the CRISPR-associated endoribonuclease Cas2 protein family. As to quaternary structure, homodimer, forms a heterotetramer with a Cas1 homodimer. Mg(2+) serves as cofactor.

CRISPR (clustered regularly interspaced short palindromic repeat), is an adaptive immune system that provides protection against mobile genetic elements (viruses, transposable elements and conjugative plasmids). CRISPR clusters contain sequences complementary to antecedent mobile elements and target invading nucleic acids. CRISPR clusters are transcribed and processed into CRISPR RNA (crRNA). Functions as a ssRNA-specific endoribonuclease. Involved in the integration of spacer DNA into the CRISPR cassette. The sequence is that of CRISPR-associated endoribonuclease Cas2 from Frankia alni (strain DSM 45986 / CECT 9034 / ACN14a).